The sequence spans 357 residues: 3-isopropylmalate dehydrogenase (357 aa).

An NAD(+)-binding site is contributed by glycine 76–glutamate 89. Substrate is bound by residues arginine 96, arginine 106, arginine 135, and aspartate 223. Mg(2+)-binding residues include aspartate 223, aspartate 247, and aspartate 251. Glycine 281–asparagine 293 lines the NAD(+) pocket.

It belongs to the isocitrate and isopropylmalate dehydrogenases family. LeuB type 1 subfamily. As to quaternary structure, homodimer. Requires Mg(2+) as cofactor. Mn(2+) serves as cofactor.

It is found in the cytoplasm. It catalyses the reaction (2R,3S)-3-isopropylmalate + NAD(+) = 4-methyl-2-oxopentanoate + CO2 + NADH. Its pathway is amino-acid biosynthesis; L-leucine biosynthesis; L-leucine from 3-methyl-2-oxobutanoate: step 3/4. Its function is as follows. Catalyzes the oxidation of 3-carboxy-2-hydroxy-4-methylpentanoate (3-isopropylmalate) to 3-carboxy-4-methyl-2-oxopentanoate. The product decarboxylates to 4-methyl-2 oxopentanoate. This is 3-isopropylmalate dehydrogenase from Helicobacter hepaticus (strain ATCC 51449 / 3B1).